We begin with the raw amino-acid sequence, 304 residues long: Non-specific ribonucleoside hydrolase RihC (304 aa).

The active site involves His233.

The protein belongs to the IUNH family. RihC subfamily.

Hydrolyzes both purine and pyrimidine ribonucleosides with a broad-substrate specificity. This chain is Non-specific ribonucleoside hydrolase RihC, found in Escherichia coli O6:H1 (strain CFT073 / ATCC 700928 / UPEC).